Reading from the N-terminus, the 1266-residue chain is Phosphatidylinositol 3,4,5-trisphosphate 5-phosphatase 2A (1266 aa).

In terms of domain architecture, SH2 spans 15-111 (WMHRDLSRAA…GLVTTLLYPV (97 aa)). The span at 114 to 123 (EETTEDRDYS) shows a compositional bias: basic and acidic residues. 2 disordered regions span residues 114 to 159 (EETT…NVTA) and 879 to 951 (DMGG…DATT). Residues 136–159 (TASTSSMTGSALVSTDTPPENVTA) are compositionally biased toward polar residues. 2 stretches are compositionally biased toward basic and acidic residues: residues 915–924 (RVSEEGEKSS) and 931–944 (TKEENTHNRGKQDP). The NPXY motif motif lies at 958–961 (NPAY). Position 961 is a phosphotyrosine (Y961). Disordered stretches follow at residues 986–1132 (PLAN…SALD) and 1147–1174 (EVEYPSGRERGASQGPTGPQLRGLSFPS). Low complexity predominate over residues 994-1012 (PPAGSVGKSKPPSGSSAQG). Residues 1045 to 1056 (RPPPDFPPPPLP) are compositionally biased toward pro residues. Positions 1203-1266 (SVDCSVGEWL…LLASLKQQQK (64 aa)) constitute an SAM domain.

Belongs to the inositol 1,4,5-trisphosphate 5-phosphatase family. In terms of processing, tyrosine phosphorylated by the members of the SRC family after exposure to a diverse array of extracellular stimuli.

It localises to the cytoplasm. It is found in the cytosol. The protein localises to the cytoskeleton. The protein resides in the membrane. Its subcellular location is the cell projection. It localises to the filopodium. It is found in the lamellipodium. The protein localises to the nucleus. The protein resides in the nucleus speckle. The enzyme catalyses a 1,2-diacyl-sn-glycero-3-phospho-(1D-myo-inositol-3,4,5-trisphosphate) + H2O = a 1,2-diacyl-sn-glycero-3-phospho-(1D-myo-inositol-3,4-bisphosphate) + phosphate. Functionally, phosphatidylinositol (PtdIns) phosphatase that specifically hydrolyzes the 5-phosphate of phosphatidylinositol-3,4,5-trisphosphate (PtdIns(3,4,5)P3) to produce PtdIns(3,4)P2, thereby negatively regulating the PI3K (phosphoinositide 3-kinase) pathways. Plays a central role in regulation of PI3K-dependent insulin signaling, although the precise molecular mechanisms and signaling pathways remain unclear. Part of a signaling pathway that regulates actin cytoskeleton remodeling. Required for the maintenance and dynamic remodeling of actin structures as well as in endocytosis, having a major impact on ligand-induced EGFR internalization and degradation. Participates in regulation of cortical and submembraneous actin. Regulates cell adhesion and cell spreading. Acts as a negative regulator of the FC-gamma-RIIA receptor (FCGR2A). Mediates signaling from the FC-gamma-RIIB receptor (FCGR2B), playing a central role in terminating signal transduction from activating immune/hematopoietic cell receptor systems. May also hydrolyze PtdIns(1,3,4,5)P4, and could thus affect the levels of the higher inositol polyphosphates like InsP6. The protein is Phosphatidylinositol 3,4,5-trisphosphate 5-phosphatase 2A (inppl1a) of Danio rerio (Zebrafish).